Reading from the N-terminus, the 224-residue chain is Ribose-5-phosphate isomerase A (224 aa).

Substrate contacts are provided by residues Thr-33–Thr-36, Asp-86–Asp-89, and Lys-99–Gly-102. Glu-108 serves as the catalytic Proton acceptor. Residue Lys-126 participates in substrate binding.

The protein belongs to the ribose 5-phosphate isomerase family. Homodimer.

The catalysed reaction is aldehydo-D-ribose 5-phosphate = D-ribulose 5-phosphate. Its pathway is carbohydrate degradation; pentose phosphate pathway; D-ribose 5-phosphate from D-ribulose 5-phosphate (non-oxidative stage): step 1/1. Its function is as follows. Catalyzes the reversible conversion of ribose-5-phosphate to ribulose 5-phosphate. This is Ribose-5-phosphate isomerase A from Bordetella avium (strain 197N).